We begin with the raw amino-acid sequence, 325 residues long: Phosphatidylglycerol--prolipoprotein diacylglyceryl transferase (325 aa).

A run of 4 helical transmembrane segments spans residues 19 to 39 (IPLR…VWFG), 47 to 67 (GGKA…GLVG), 93 to 113 (IWEG…GAWI), and 119 to 139 (GIPL…AQAI). Residue Arg141 coordinates a 1,2-diacyl-sn-glycero-3-phospho-(1'-sn-glycerol). Transmembrane regions (helical) follow at residues 175-195 (HPTF…VIWA), 207-225 (FALY…EYMR), and 237-257 (LNVW…VISA). A compositionally biased stretch (basic and acidic residues) spans 266–312 (IVEPDRDATPAEKDGSGEDGSGEKGVAKADAAAKDPLTKDEPGKDAT). The tract at residues 266–325 (IVEPDRDATPAEKDGSGEDGSGEKGVAKADAAAKDPLTKDEPGKDATAENAGAAGAAEKA) is disordered. Low complexity predominate over residues 313-325 (AENAGAAGAAEKA).

This sequence belongs to the Lgt family.

It is found in the cell membrane. It catalyses the reaction L-cysteinyl-[prolipoprotein] + a 1,2-diacyl-sn-glycero-3-phospho-(1'-sn-glycerol) = an S-1,2-diacyl-sn-glyceryl-L-cysteinyl-[prolipoprotein] + sn-glycerol 1-phosphate + H(+). The protein operates within protein modification; lipoprotein biosynthesis (diacylglyceryl transfer). Functionally, catalyzes the transfer of the diacylglyceryl group from phosphatidylglycerol to the sulfhydryl group of the N-terminal cysteine of a prolipoprotein, the first step in the formation of mature lipoproteins. The sequence is that of Phosphatidylglycerol--prolipoprotein diacylglyceryl transferase from Streptomyces griseus subsp. griseus (strain JCM 4626 / CBS 651.72 / NBRC 13350 / KCC S-0626 / ISP 5235).